Here is a 371-residue protein sequence, read N- to C-terminus: tRNA-specific 2-thiouridylase MnmA (371 aa).

Residues 16–23 (GMSGGVDS) and M42 each bind ATP. The interaction with target base in tRNA stretch occupies residues 102–104 (NPD). C107 (nucleophile) is an active-site residue. A disulfide bridge connects residues C107 and C204. An ATP-binding site is contributed by G132. Positions 154 to 156 (KDQ) are interaction with tRNA. Catalysis depends on C204, which acts as the Cysteine persulfide intermediate. Residues 316-317 (RY) are interaction with tRNA.

It belongs to the MnmA/TRMU family.

It localises to the cytoplasm. It catalyses the reaction S-sulfanyl-L-cysteinyl-[protein] + uridine(34) in tRNA + AH2 + ATP = 2-thiouridine(34) in tRNA + L-cysteinyl-[protein] + A + AMP + diphosphate + H(+). Functionally, catalyzes the 2-thiolation of uridine at the wobble position (U34) of tRNA, leading to the formation of s(2)U34. This chain is tRNA-specific 2-thiouridylase MnmA, found in Shewanella piezotolerans (strain WP3 / JCM 13877).